A 462-amino-acid polypeptide reads, in one-letter code: beta-Tubulin at 65B (462 aa).

GTP is bound by residues Glu-70, Ser-137, Gly-141, Thr-142, Gly-143, Asn-203, and Asn-225. Glu-70 lines the Mg(2+) pocket. Positions 420-462 are disordered; it reads DYRSSAEGEDSGGGGGGGGGRSGSAESGEEEATPEAHCQYCTE. Over residues 430–441 the composition is skewed to gly residues; it reads SGGGGGGGGGRS.

The protein belongs to the tubulin family. Dimer of alpha and beta chains. A typical microtubule is a hollow water-filled tube with an outer diameter of 25 nm and an inner diameter of 15 nM. Alpha-beta heterodimers associate head-to-tail to form protofilaments running lengthwise along the microtubule wall with the beta-tubulin subunit facing the microtubule plus end conferring a structural polarity. Microtubules usually have 13 protofilaments but different protofilament numbers can be found in some organisms and specialized cells. The cofactor is Mg(2+).

It is found in the cytoplasm. The protein resides in the cytoskeleton. In terms of biological role, tubulin is the major constituent of microtubules, a cylinder consisting of laterally associated linear protofilaments composed of alpha- and beta-tubulin heterodimers. Microtubules grow by the addition of GTP-tubulin dimers to the microtubule end, where a stabilizing cap forms. Below the cap, tubulin dimers are in GDP-bound state, owing to GTPase activity of alpha-tubulin. The protein is beta-Tubulin at 65B of Drosophila melanogaster (Fruit fly).